The primary structure comprises 140 residues: UPF0134 protein MPN_094 (140 aa).

It belongs to the UPF0134 family.

The protein is UPF0134 protein MPN_094 of Mycoplasma pneumoniae (strain ATCC 29342 / M129 / Subtype 1) (Mycoplasmoides pneumoniae).